We begin with the raw amino-acid sequence, 394 residues long: MATIRNQRFSLLKQPISSILNQHLIDYPTPSNLSYWWGFGSLAGICLVIQIVTGVFLAMHYTPHVDLAFNSVEHIMRDVEGGWLLRYMHANGASMFFIVVYLHTFRGLYYASYSSPREFVWCLGVVIFLLMIVTAFIGYVLPWGQMSFWGATVITSLASAIPVVGDTIVTWLWGGFSVDNATLNRFFSLYHLLPFILVGASLLHLAALHQYGSSNPLGVHSEMDKISFYPYFYVKDLVGWVAFAIFFSIWIFYAPNVLGHPDNYIPANPMSTPPHIVPEWYFLPIYAILRSIPDKAGGVAAIALVFICLLALPFFKDMYVRSSSFRPIYQGIFWLLLADCLLLGWIGCQPVEAPFVTIGQISSIVFFLFFAITPILGRVGRGIPNSYTDETDHT.

Transmembrane regions (helical) follow at residues 39–59, 83–105, 120–140, and 186–206; these read FGSL…FLAM, WLLR…LHTF, VWCL…IGYV, and FFSL…LHLA. 2 residues coordinate heme b: His-89 and His-103. Heme b contacts are provided by His-191 and His-204. His-209 is a binding site for a ubiquinone. Helical transmembrane passes span 232 to 252, 296 to 316, 328 to 348, and 355 to 374; these read FYVK…IWIF, AGGV…PFFK, IYQG…WIGC, and FVTI…AITP.

This sequence belongs to the cytochrome b family. In terms of assembly, the main subunits of complex b-c1 are: cytochrome b, cytochrome c1 and the Rieske protein. It depends on heme b as a cofactor.

It localises to the mitochondrion inner membrane. Its function is as follows. Component of the ubiquinol-cytochrome c reductase complex (complex III or cytochrome b-c1 complex) that is part of the mitochondrial respiratory chain. The b-c1 complex mediates electron transfer from ubiquinol to cytochrome c. Contributes to the generation of a proton gradient across the mitochondrial membrane that is then used for ATP synthesis. The polypeptide is Cytochrome b (MT-CYB) (Oenothera berteroana (Bertero's evening primrose)).